We begin with the raw amino-acid sequence, 337 residues long: tRNA N6-adenosine threonylcarbamoyltransferase (337 aa).

The Fe cation site is built by histidine 111 and histidine 115. Residues 134-138, aspartate 167, glycine 180, and asparagine 272 each bind substrate; that span reads LVSGG. A Fe cation-binding site is contributed by aspartate 300.

Belongs to the KAE1 / TsaD family. Fe(2+) serves as cofactor.

The protein localises to the cytoplasm. It catalyses the reaction L-threonylcarbamoyladenylate + adenosine(37) in tRNA = N(6)-L-threonylcarbamoyladenosine(37) in tRNA + AMP + H(+). Required for the formation of a threonylcarbamoyl group on adenosine at position 37 (t(6)A37) in tRNAs that read codons beginning with adenine. Is involved in the transfer of the threonylcarbamoyl moiety of threonylcarbamoyl-AMP (TC-AMP) to the N6 group of A37, together with TsaE and TsaB. TsaD likely plays a direct catalytic role in this reaction. The polypeptide is tRNA N6-adenosine threonylcarbamoyltransferase (Escherichia coli (strain K12 / MC4100 / BW2952)).